The chain runs to 490 residues: Phosphoethanolamine N-methyltransferase 3 (490 aa).

Positions 60, 65, 81, 106, 107, and 125 each coordinate S-adenosyl-L-homocysteine. Positions 158, 163, 164, 168, and 175 each coordinate phosphocholine. N-methylethanolamine phosphate is bound by residues 244 to 245 (QY) and Tyr253. Tyr253 serves as a coordination point for phosphocholine. S-adenosyl-L-homocysteine contacts are provided by Val262, Ser263, Gly289, Asp311, Asp337, Cys338, and Arg354. 5 residues coordinate phosphocholine: Tyr385, Tyr399, Arg403, Tyr405, and Lys471. N-methylethanolamine phosphate contacts are provided by residues Tyr385, Tyr399, 403–405 (RGY), and Lys471.

Belongs to the class I-like SAM-binding methyltransferase superfamily. PEAMT family. In terms of tissue distribution, expressed in root vasculature, shoots, rosettes leaves, cauline leaves, sepals, petals, anther filaments and ovules. Highly expressed in leaf vasculature.

Its subcellular location is the cytoplasm. It catalyses the reaction phosphoethanolamine + S-adenosyl-L-methionine = N-methylethanolamine phosphate + S-adenosyl-L-homocysteine + H(+). It carries out the reaction N-methylethanolamine phosphate + S-adenosyl-L-methionine = N,N-dimethylethanolamine phosphate + S-adenosyl-L-homocysteine + H(+). The enzyme catalyses N,N-dimethylethanolamine phosphate + S-adenosyl-L-methionine = phosphocholine + S-adenosyl-L-homocysteine + H(+). It participates in phospholipid metabolism; phosphatidylcholine biosynthesis; phosphocholine from phosphoethanolamine: step 1/1. Functionally, involved in phosphocholine biosynthesis. Catalyzes the N-methylation of phosphoethanolamine, phosphomonomethylethanolamine and phosphodimethylethanolamine, the three methylation steps required to convert phosphoethanolamine to phosphocholine (PC). In association with NMT1, regulates PC homeostasis, phase transition at the shoot apex, coordinated organ development, and fertility. In associtation with NMT1, involved in phosphatidylcholine biosynthesis and vascular development. In Arabidopsis thaliana (Mouse-ear cress), this protein is Phosphoethanolamine N-methyltransferase 3.